A 940-amino-acid polypeptide reads, in one-letter code: Receptor-like protein 9b (940 aa).

The signal sequence occupies residues 1–28 (MLMMFSPAFVMVMDLMVLVMMIMMMVSS). Residues 29 to 895 (LDAHGHISCI…GDEETTIDME (867 aa)) are Extracellular-facing. Asn53, Asn63, Asn66, Asn101, Asn115, and Asn151 each carry an N-linked (GlcNAc...) asparagine glycan. LRR repeat units lie at residues 108-136 (FGEL…SFER), 137-163 (LKNL…TASS), 165-185 (KTLI…ELIN), 186-211 (LRNL…NFHN), 213-232 (QGLD…LCQL), 233-255 (KNLR…CFDS), 257-279 (TQLQ…LIRN), 281-304 (DSVE…LIAN), 306-330 (SKLK…SLQP), 331-354 (KFQL…IQHQ), 355-378 (KDLH…LLEK), 379-402 (YPNL…RLLN), 403-426 (HTLQ…IGKV), 427-450 (LPNI…SFGE), 452-475 (KDIK…FLIG), and 477-502 (SSLH…NFGS). N-linked (GlcNAc...) asparagine glycans are attached at residues Asn270 and Asn304. 3 N-linked (GlcNAc...) asparagine glycosylation sites follow: Asn361, Asn389, and Asn402. Residues Asn434 and Asn463 are each glycosylated (N-linked (GlcNAc...) asparagine). An LRR 17; degenerate repeat occupies 503 to 522 (LVVLIANNNLFTGIADGLRN). LRR repeat units follow at residues 523–546 (VQSL…WFGG), 547–570 (FFFA…LFSK), 571–593 (PTFK…HFTG), 595–615 (DMSL…STLI), 616–639 (KDVL…VKNE), 641–662 (ILSL…LCGL), 663–686 (RSIR…LNNV), 752–776 (FNFM…LGDL), 777–799 (QRIR…SFSN), 801–824 (TDIE…LSKL), and 826–849 (YMVV…KFST). A glycan (N-linked (GlcNAc...) asparagine) is linked at Asn685. 2 N-linked (GlcNAc...) asparagine glycosylation sites follow: Asn783 and Asn799. N-linked (GlcNAc...) asparagine glycans are attached at residues Asn831, Asn836, Asn867, and Asn873. A helical transmembrane segment spans residues 896 to 916 (IFYWSLAATYGVTWITFIVFL). Residues 917–940 (CFDSPWRRVWFHFVDAFISLFKCV) are Cytoplasmic-facing.

It belongs to the RLP family.

It localises to the cell membrane. This is Receptor-like protein 9b from Arabidopsis thaliana (Mouse-ear cress).